Reading from the N-terminus, the 483-residue chain is Prenyltransferase vrtC (483 aa).

It belongs to the tryptophan dimethylallyltransferase family.

It participates in secondary metabolite biosynthesis; terpenoid biosynthesis. Prenyltransferase; part of the gene cluster that mediates the biosynthesis of viridicatumtoxin, a tetracycline-like fungal meroterpenoid with a unique, fused spirobicyclic ring system. The first step of the pathway is the production of the malonamoyl-CoA starter unit for the polyketide synthase vrtA. The aldolase vrtJ may be involved in the synthesis of the malonamate substrate for malonamoyl-CoA synthetase vrtB. The polyketide synthase vrtA then may utilize the malonamoyl-CoA starter unit, followed by sequential condensation of eight malonyl-CoA units to form the polyketide backbone. The cyclization of the last ring could be mediated by the lactamase-like protein vrtG. The proposed post-PKS tailoring steps are a hydroxylation at C5 catalyzed the cytochrome P450 monooxygenase vrtE, a hydroxylation at C12a catalyzed by VrtH and/or VrtI, and an O-methylation by the O-methyltransferase vrtF. VrtC is then proposed to catalyze the transfer of a geranyl group synthesized by vrtD to the aromatic C ring of the tetracyclic polyketide intermediate of viridicatumtoxin to yield previridicatumtoxin. Finally, the cytochrome P450 monooxygenase vrtK catalyzes the spirocyclization of the geranyl moiety of previridicatumtoxin to afford viridicatumtoxin. This Penicillium aethiopicum protein is Prenyltransferase vrtC.